The chain runs to 379 residues: 1-deoxy-D-xylulose 5-phosphate reductoisomerase (379 aa).

Threonine 10, glycine 11, serine 12, isoleucine 13, asparagine 39, and asparagine 121 together coordinate NADPH. 1-deoxy-D-xylulose 5-phosphate is bound at residue lysine 122. Glutamate 123 contributes to the NADPH binding site. Aspartate 147 contributes to the Mn(2+) binding site. 4 residues coordinate 1-deoxy-D-xylulose 5-phosphate: serine 148, glutamate 149, serine 173, and histidine 196. Glutamate 149 is a Mn(2+) binding site. Residue glycine 202 coordinates NADPH. Serine 209, asparagine 214, lysine 215, and glutamate 218 together coordinate 1-deoxy-D-xylulose 5-phosphate. Glutamate 218 is a Mn(2+) binding site.

It belongs to the DXR family. It depends on Mg(2+) as a cofactor. Mn(2+) is required as a cofactor.

It carries out the reaction 2-C-methyl-D-erythritol 4-phosphate + NADP(+) = 1-deoxy-D-xylulose 5-phosphate + NADPH + H(+). Its pathway is isoprenoid biosynthesis; isopentenyl diphosphate biosynthesis via DXP pathway; isopentenyl diphosphate from 1-deoxy-D-xylulose 5-phosphate: step 1/6. Its function is as follows. Catalyzes the NADPH-dependent rearrangement and reduction of 1-deoxy-D-xylulose-5-phosphate (DXP) to 2-C-methyl-D-erythritol 4-phosphate (MEP). In Chlamydia pneumoniae (Chlamydophila pneumoniae), this protein is 1-deoxy-D-xylulose 5-phosphate reductoisomerase.